The sequence spans 64 residues: Large ribosomal subunit protein bL28 (64 aa).

Belongs to the bacterial ribosomal protein bL28 family.

This is Large ribosomal subunit protein bL28 from Elusimicrobium minutum (strain Pei191).